The sequence spans 428 residues: G2/mitotic-specific cyclin-1 (428 aa).

Residues 1–22 (MKFSEEKNVSNNPTNFEGGLDS) form a disordered region.

The protein belongs to the cyclin family. Cyclin AB subfamily. In terms of assembly, interacts with the CDC2 protein kinase to form a serine/threonine kinase holoenzyme complex also known as maturation promoting factor (MPF). The cyclin subunit imparts substrate specificity to the complex.

Its function is as follows. Essential for the control of the cell cycle at the G2/M (mitosis) transition. This chain is G2/mitotic-specific cyclin-1, found in Medicago sativa subsp. varia (Alfalfa).